The sequence spans 370 residues: Glucan endo-1,3-beta-glucosidase, basic vacuolar isoform GLB (370 aa).

Positions 1–32 (MSTSDKHNTPQMAAITLLGLLLVASTIEIAGA) are cleaved as a signal peptide. Gln-33 bears the Pyrrolidone carboxylic acid mark. Glu-128 acts as the Proton donor in catalysis. The active-site Nucleophile is the Glu-273. Positions 349 to 370 (VSGGVWDSSVETNATASLISEM) are cleaved as a propeptide — removed in mature form. A glycan (N-linked (GlcNAc...) asparagine) is linked at Asn-361.

It belongs to the glycosyl hydrolase 17 family. Is expressed primarily in epidermal cell of healthy plant, and following induction by ethylene, accumulates in mesophyll cells.

It is found in the vacuole. It catalyses the reaction Hydrolysis of (1-&gt;3)-beta-D-glucosidic linkages in (1-&gt;3)-beta-D-glucans.. Functionally, implicated in the defense of plants against pathogens. This Nicotiana tabacum (Common tobacco) protein is Glucan endo-1,3-beta-glucosidase, basic vacuolar isoform GLB.